The sequence spans 391 residues: Phosphopentomutase (391 aa).

D14 contacts Mn(2+). The tract at residues 61–88 (IQGVPPDPAPTAFHGRMAERSEGKDTTT) is disordered. Residues 76–87 (RMAERSEGKDTT) are compositionally biased toward basic and acidic residues. The Mn(2+) site is built by D286, H291, D327, H328, and H339.

It belongs to the phosphopentomutase family. Requires Mn(2+) as cofactor.

It is found in the cytoplasm. It carries out the reaction 2-deoxy-alpha-D-ribose 1-phosphate = 2-deoxy-D-ribose 5-phosphate. The catalysed reaction is alpha-D-ribose 1-phosphate = D-ribose 5-phosphate. Its pathway is carbohydrate degradation; 2-deoxy-D-ribose 1-phosphate degradation; D-glyceraldehyde 3-phosphate and acetaldehyde from 2-deoxy-alpha-D-ribose 1-phosphate: step 1/2. Its function is as follows. Isomerase that catalyzes the conversion of deoxy-ribose 1-phosphate (dRib-1-P) and ribose 1-phosphate (Rib-1-P) to deoxy-ribose 5-phosphate (dRib-5-P) and ribose 5-phosphate (Rib-5-P), respectively. The sequence is that of Phosphopentomutase from Anaeromyxobacter dehalogenans (strain 2CP-C).